The sequence spans 906 residues: Ectonucleotide pyrophosphatase/phosphodiesterase family member 1 (906 aa).

Residues 1–22 (MERDGDQAGHGPRHGSAGNGRE) form a disordered region. Over 1-58 (MERDGDQAGHGPRHGSAGNGRELESPAAASLLAPMDLGEEPLEKAERARPAKDPNTYK) the chain is Cytoplasmic. Residue S25 is modified to Phosphoserine. Residues 27–34 (AAASLLAP) carry the Di-leucine motif motif. Residues 59–79 (VLSLVLSVCVLTTILGCIFGL) form a helical; Signal-anchor for type II membrane protein membrane-spanning segment. The Extracellular segment spans residues 80-906 (KPSCAKEVKS…THLPIFSQED (827 aa)). 2 consecutive SMB domains span residues 86 to 126 (EVKS…VEPT) and 127 to 171 (HIWT…DKKS). 10 disulfide bridges follow: C90–C104, C94–C122, C102–C115, C108–C114, C131–C148, C136–C166, C146–C159, C152–C158, C177–C223, and C185–C397. A glycan (N-linked (GlcNAc...) asparagine) is linked at N161. Residues 173-573 (VEETCESIDT…APNNGSHGSL (401 aa)) form a phosphodiesterase region. AMP is bound by residues D200, T238, and N259. Zn(2+) contacts are provided by D200 and T238. The AMP-threonine intermediate role is filled by T238. 2 residues coordinate CMP: T238 and N259. DTMP is bound by residues T238 and N259. Residues T238 and N259 each coordinate GMP. A Phosphothreonine modification is found at T238. N267 carries an N-linked (GlcNAc...) asparagine glycan. L272, K277, and Y322 together coordinate GMP. AMP-binding residues include K277 and Y322. CMP contacts are provided by K277 and Y322. Y322 lines the dTMP pocket. A glycan (N-linked (GlcNAc...) asparagine) is linked at N323. D358 serves as a coordination point for AMP. Residues D358, H362, D405, and H406 each coordinate Zn(2+). D358 provides a ligand contact to CMP. Residue D358 coordinates dTMP. D358 is a binding site for GMP. A 2',3'-cGAMP-binding site is contributed by H362. An AMP-binding site is contributed by H406. H406 contacts CMP. H406 lines the dTMP pocket. Position 406 (H406) interacts with GMP. Intrachain disulfides connect C413-C512, C462-C849, C596-C653, C607-C707, C609-C692, and C819-C829. The N-linked (GlcNAc...) asparagine glycan is linked to N459. S514 contacts 2',3'-cGAMP. AMP is bound at residue H517. H517 serves as a coordination point for Zn(2+). H517 is a CMP binding site. Position 517 (H517) interacts with dTMP. Position 517 (H517) interacts with GMP. N-linked (GlcNAc...) asparagine glycans are attached at residues N567 and N624. The interval 579–628 (KPIYNPSHPKEEGFLSQCPIKSTSNDLGCTCDPWIVPIKDFEKQLNLTTE) is linker. The interval 635–906 (HMTVPYGRPR…THLPIFSQED (272 aa)) is nuclease-like domain. The Ca(2+) site is built by D781, D783, D785, R787, and D789.

The protein belongs to the nucleotide pyrophosphatase/phosphodiesterase family. In terms of assembly, ectonucleotide pyrophosphatase/phosphodiesterase family member 1: Homodimer. Ectonucleotide pyrophosphatase/phosphodiesterase family member 1: Interacts with INSR; leading to inhibit INSR autophosphorylation and subsequent activation of INSR kinase activity. Ectonucleotide pyrophosphatase/phosphodiesterase family member 1, secreted form: Monomeric. It depends on Zn(2+) as a cofactor. Post-translationally, N-glycosylated. The secreted form is produced through cleavage at Lys-85 by intracellular processing. In terms of tissue distribution, selectively expressed on the surface of antibody-secreting cells. Expressed in osteocytes and osteoclasts.

The protein localises to the cell membrane. It is found in the basolateral cell membrane. Its subcellular location is the secreted. It carries out the reaction Hydrolytically removes 5'-nucleotides successively from the 3'-hydroxy termini of 3'-hydroxy-terminated oligonucleotides.. The enzyme catalyses a ribonucleoside 5'-triphosphate + H2O = a ribonucleoside 5'-phosphate + diphosphate + H(+). The catalysed reaction is ATP + H2O = AMP + diphosphate + H(+). It catalyses the reaction UTP + H2O = UMP + diphosphate + H(+). It carries out the reaction GTP + H2O = GMP + diphosphate + H(+). The enzyme catalyses CTP + H2O = CMP + diphosphate + H(+). The catalysed reaction is 2',3'-cGAMP + 2 H2O = GMP + AMP + 2 H(+). It catalyses the reaction P(1),P(4)-bis(5'-adenosyl) tetraphosphate + H2O = AMP + ATP + 2 H(+). It carries out the reaction 3',5'-cyclic AMP + H2O = AMP + H(+). At low concentrations of ATP, a phosphorylated intermediate is formed which inhibits further hydrolysis. Nucleotide pyrophosphatase that generates diphosphate (PPi) and functions in bone mineralization and soft tissue calcification by regulating pyrophosphate levels. PPi inhibits bone mineralization and soft tissue calcification by binding to nascent hydroxyapatite crystals, thereby preventing further growth of these crystals. Preferentially hydrolyzes ATP, but can also hydrolyze other nucleoside 5' triphosphates such as GTP, CTP and UTP to their corresponding monophosphates with release of pyrophosphate, as well as diadenosine polyphosphates, and also 3',5'-cAMP to AMP. May also be involved in the regulation of the availability of nucleotide sugars in the endoplasmic reticulum and Golgi, and the regulation of purinergic signaling. Inhibits ectopic joint calcification and maintains articular chondrocytes by repressing hedgehog signaling; it is however unclear whether hedgehog inhibition is direct or indirect. Appears to modulate insulin sensitivity. Also involved in melanogenesis. Also able to hydrolyze 2',3'-cGAMP (cyclic GMP-AMP), a second messenger that activates TMEM173/STING and triggers type-I interferon production. 2',3'-cGAMP degradation takes place in the lumen or extracellular space, and not in the cytosol where it is produced; the role of 2',3'-cGAMP hydrolysis is therefore unclear. Not able to hydrolyze the 2',3'-cGAMP linkage isomer 3',3'-cGAMP. The polypeptide is Ectonucleotide pyrophosphatase/phosphodiesterase family member 1 (Mus musculus (Mouse)).